A 502-amino-acid chain; its full sequence is ATP synthase subunit beta (502 aa).

Position 153-160 (153-160) interacts with ATP; sequence GGAGVGKT.

This sequence belongs to the ATPase alpha/beta chains family. As to quaternary structure, F-type ATPases have 2 components, CF(1) - the catalytic core - and CF(0) - the membrane proton channel. CF(1) has five subunits: alpha(3), beta(3), gamma(1), delta(1), epsilon(1). CF(0) has three main subunits: a(1), b(2) and c(9-12). The alpha and beta chains form an alternating ring which encloses part of the gamma chain. CF(1) is attached to CF(0) by a central stalk formed by the gamma and epsilon chains, while a peripheral stalk is formed by the delta and b chains.

Its subcellular location is the cell membrane. The enzyme catalyses ATP + H2O + 4 H(+)(in) = ADP + phosphate + 5 H(+)(out). Produces ATP from ADP in the presence of a proton gradient across the membrane. The catalytic sites are hosted primarily by the beta subunits. The sequence is that of ATP synthase subunit beta from Amoebophilus asiaticus (strain 5a2).